The chain runs to 217 residues: Somatotropin (217 aa).

The N-terminal stretch at 1-26 (MATGSRTSLLLAFTLLCLPQLKEAGA) is a signal peptide. H44 is a binding site for Zn(2+). C79 and C191 are disulfide-bonded. Position 132 is a phosphoserine (S132). E200 contributes to the Zn(2+) binding site. Cysteines 208 and 215 form a disulfide.

This sequence belongs to the somatotropin/prolactin family.

It localises to the secreted. In terms of biological role, plays an important role in growth control. Its major role in stimulating body growth is to stimulate the liver and other tissues to secrete IGF1. It stimulates both the differentiation and proliferation of myoblasts. It also stimulates amino acid uptake and protein synthesis in muscle and other tissues. This Saimiri boliviensis boliviensis (Bolivian squirrel monkey) protein is Somatotropin (GH1).